The chain runs to 147 residues: uncharacterized protein (147 aa).

Disordered stretches follow at residues 1–49 (MRTP…NLNE) and 125–147 (SPSPTTSFNSTNPQNTHQTRKSN). 2 stretches are compositionally biased toward low complexity: residues 8–49 (NNNY…NLNE) and 125–140 (SPSPTTSFNSTNPQNT).

This is an uncharacterized protein from Dictyostelium discoideum (Social amoeba).